Here is a 212-residue protein sequence, read N- to C-terminus: uncharacterized protein (212 aa).

This is an uncharacterized protein from Acanthamoeba polyphaga mimivirus (APMV).